Here is a 315-residue protein sequence, read N- to C-terminus: Ribosomal protein L11 methyltransferase (315 aa).

S-adenosyl-L-methionine contacts are provided by threonine 161, glycine 182, aspartate 204, and asparagine 248.

This sequence belongs to the methyltransferase superfamily. PrmA family.

Its subcellular location is the cytoplasm. The catalysed reaction is L-lysyl-[protein] + 3 S-adenosyl-L-methionine = N(6),N(6),N(6)-trimethyl-L-lysyl-[protein] + 3 S-adenosyl-L-homocysteine + 3 H(+). Its function is as follows. Methylates ribosomal protein L11. The sequence is that of Ribosomal protein L11 methyltransferase from Shouchella clausii (strain KSM-K16) (Alkalihalobacillus clausii).